Here is a 485-residue protein sequence, read N- to C-terminus: Predicted GPI-anchored protein 27 (485 aa).

A signal peptide spans 1 to 20; the sequence is MHFTSSLLATLIWFTLPVQS. N-linked (GlcNAc...) asparagine glycosylation is found at asparagine 30, asparagine 86, asparagine 96, and asparagine 444. Residue glycine 467 is the site of GPI-anchor amidated glycine attachment. Positions 468 to 485 are cleaved as a propeptide — removed in mature form; it reads LVLVSSGVLLGTCLLFIL.

The protein resides in the cell membrane. This chain is Predicted GPI-anchored protein 27 (PGA27), found in Candida albicans (strain SC5314 / ATCC MYA-2876) (Yeast).